A 71-amino-acid polypeptide reads, in one-letter code: uncharacterized protein (71 aa).

A helical membrane pass occupies residues Ile2 to Met24. The tract at residues Pro48 to Arg71 is disordered. Over residues Ala49–Arg71 the composition is skewed to polar residues.

The protein resides in the membrane. This is an uncharacterized protein from Archaeoglobus fulgidus (strain ATCC 49558 / DSM 4304 / JCM 9628 / NBRC 100126 / VC-16).